Here is a 297-residue protein sequence, read N- to C-terminus: Carbamate kinase (297 aa).

This sequence belongs to the carbamate kinase family.

Its subcellular location is the cytoplasm. The catalysed reaction is hydrogencarbonate + NH4(+) + ATP = carbamoyl phosphate + ADP + H2O + H(+). It carries out the reaction carbamate + ATP = carbamoyl phosphate + ADP. It catalyses the reaction hydrogencarbonate + NH4(+) = carbamate + H2O + H(+). Its pathway is nitrogen metabolism; (S)-allantoin degradation. Kinase involved in the anaerobic nitrogen utilization via the assimilation of allantoin. Catalyzes the transfer of a phosphate group from carbamoyl phosphate to ADP to produce ATP and leave carbamate, which spontaneously hydrolyzes to ammonia and hydrogencarbonate. This is Carbamate kinase from Escherichia coli (strain K12).